Here is a 344-residue protein sequence, read N- to C-terminus: Dihydroorotase (344 aa).

Residues histidine 13 and histidine 15 each contribute to the Zn(2+) site. Substrate-binding positions include 15 to 17 (HVR) and asparagine 41. Lysine 99, histidine 136, and histidine 174 together coordinate Zn(2+). Lysine 99 is modified (N6-carboxylysine). Position 136 (histidine 136) interacts with substrate. Leucine 219 provides a ligand contact to substrate. Residue aspartate 247 coordinates Zn(2+). Aspartate 247 is a catalytic residue. Substrate is bound by residues histidine 251 and alanine 263.

Belongs to the metallo-dependent hydrolases superfamily. DHOase family. Class II DHOase subfamily. As to quaternary structure, homodimer. Zn(2+) is required as a cofactor.

The catalysed reaction is (S)-dihydroorotate + H2O = N-carbamoyl-L-aspartate + H(+). It participates in pyrimidine metabolism; UMP biosynthesis via de novo pathway; (S)-dihydroorotate from bicarbonate: step 3/3. Catalyzes the reversible cyclization of carbamoyl aspartate to dihydroorotate. The protein is Dihydroorotase of Aromatoleum aromaticum (strain DSM 19018 / LMG 30748 / EbN1) (Azoarcus sp. (strain EbN1)).